The following is a 396-amino-acid chain: MKKNILLLFLVHGANYLFPFIVLPYQTRILSIETFADVAKIQAAVMLLSLIVNYGYNLSSTRAIARAVSQAEINKIYSETLIVKLLLATICLALGCVHLMYVKEYSLIYPFIISSIYLYGSALFATWLFQGLEKMKAVVIATTIAKLTGVILTFILVKSPNDIVAALFTQNIGMFISGIISIYLVRKNKYATVICFRLKNIIVSLKEAWPFFLSLAATSVYTYFNVILLSFYAGDYVVANFNAADKLRMAAQGLLIPIGQAVFPRLSKLEGYEYSSKLKIYAIRYAIFGVCISAGLVFLGPMLTTIYLGKEYSLSGEYLQSMFLLPATISISTILSQWMLIPQGKEKILSRIYILGAIVHLLYAFPLVYYYGAWGMVISILFTEVLIVLFMLKAVK.

The next 11 helical transmembrane spans lie at 5–25, 32–52, 82–102, 107–127, 137–157, 163–183, 211–231, 286–306, 322–342, 348–368, and 372–392; these read ILLL…VLPY, IETF…SLIV, IVKL…LMYV, LIYP…FATW, AVVI…FILV, IVAA…ISIY, FFLS…LLSF, AIFG…LTTI, MFLL…MLIP, ILSR…FPLV, and GAWG…LFML.

This sequence belongs to the polysaccharide synthase family.

It localises to the cell inner membrane. It participates in bacterial outer membrane biogenesis; LPS O-antigen biosynthesis. Functionally, may be involved in the translocation process of the nascent O-polysaccharide molecules and/or its ligation to lipid A core units. The sequence is that of Putative O-antigen transporter (rfbX) from Shigella dysenteriae.